The chain runs to 176 residues: Acireductone dioxygenase (176 aa).

Residues H81, H83, E87, and H126 each contribute to the Fe(2+) site. 4 residues coordinate Ni(2+): H81, H83, E87, and H126.

It belongs to the acireductone dioxygenase (ARD) family. Requires Fe(2+) as cofactor. Ni(2+) serves as cofactor.

The protein resides in the cytoplasm. Its subcellular location is the nucleus. It carries out the reaction 1,2-dihydroxy-5-(methylsulfanyl)pent-1-en-3-one + O2 = 4-methylsulfanyl-2-oxobutanoate + formate + 2 H(+). It catalyses the reaction 1,2-dihydroxy-5-(methylsulfanyl)pent-1-en-3-one + O2 = 3-(methylsulfanyl)propanoate + CO + formate + 2 H(+). It participates in amino-acid biosynthesis; L-methionine biosynthesis via salvage pathway; L-methionine from S-methyl-5-thio-alpha-D-ribose 1-phosphate: step 5/6. In terms of biological role, catalyzes 2 different reactions between oxygen and the acireductone 1,2-dihydroxy-3-keto-5-methylthiopentene (DHK-MTPene) depending upon the metal bound in the active site. Fe-containing acireductone dioxygenase (Fe-ARD) produces formate and 2-keto-4-methylthiobutyrate (KMTB), the alpha-ketoacid precursor of methionine in the methionine recycle pathway. Ni-containing acireductone dioxygenase (Ni-ARD) produces methylthiopropionate, carbon monoxide and formate, and does not lie on the methionine recycle pathway. The protein is Acireductone dioxygenase (adi1) of Sclerotinia sclerotiorum (strain ATCC 18683 / 1980 / Ss-1) (White mold).